The sequence spans 1183 residues: Probable RNA-dependent RNA polymerase 4 (1183 aa).

The protein belongs to the RdRP family. As to expression, expressed in shoot apical meristem (SAM) and panicles.

The enzyme catalyses RNA(n) + a ribonucleoside 5'-triphosphate = RNA(n+1) + diphosphate. Functionally, probably involved in the RNA silencing pathway and required for the generation of small interfering RNAs (siRNAs). In Oryza sativa subsp. japonica (Rice), this protein is Probable RNA-dependent RNA polymerase 4 (RDR4).